A 132-amino-acid chain; its full sequence is Ribosome-binding factor A (132 aa).

The protein belongs to the RbfA family. Monomer. Binds 30S ribosomal subunits, but not 50S ribosomal subunits or 70S ribosomes.

Its subcellular location is the cytoplasm. In terms of biological role, one of several proteins that assist in the late maturation steps of the functional core of the 30S ribosomal subunit. Associates with free 30S ribosomal subunits (but not with 30S subunits that are part of 70S ribosomes or polysomes). Required for efficient processing of 16S rRNA. May interact with the 5'-terminal helix region of 16S rRNA. This Prochlorococcus marinus (strain MIT 9515) protein is Ribosome-binding factor A.